The following is a 781-amino-acid chain: Ubiquitin carboxyl-terminal hydrolase 14 (781 aa).

Residues 169 to 279 form a UBP-type zinc finger; that stretch reads STCPHTENFQ…SALQIYGINI (111 aa). C171, H173, C192, C195, C204, C207, C212, H224, H228, H235, C253, and C256 together coordinate Zn(2+). The region spanning 323 to 781 is the USP domain; the sequence is CGLINLGNSC…NGYIYFYTRC (459 aa). C332 functions as the Nucleophile in the catalytic mechanism. UBA domains lie at 576 to 626 and 649 to 689; these read DEDE…LFQH and EVDE…VFNN. H737 (proton acceptor) is an active-site residue.

Belongs to the peptidase C19 family.

It is found in the cytoplasm. The protein localises to the nucleus. It carries out the reaction Thiol-dependent hydrolysis of ester, thioester, amide, peptide and isopeptide bonds formed by the C-terminal Gly of ubiquitin (a 76-residue protein attached to proteins as an intracellular targeting signal).. Its function is as follows. Required for the adaptation to the presence of glucose in the growth medium; mediates the degradation of enzymes involved in gluconeogenesis when cells are shifted to glucose-containing medium. Required for proteasome-dependent catabolite degradation of fructose-1,6-bisphosphatase (FBP1). Accelerates proteasomal breakdown of ubiquitinated proteins as it disassembles free ubiquitin chains that would compete with ubiquitinated proteins to bind to the proteasome. The sequence is that of Ubiquitin carboxyl-terminal hydrolase 14 (UBP14) from Saccharomyces cerevisiae (strain ATCC 204508 / S288c) (Baker's yeast).